The primary structure comprises 469 residues: ATP synthase subunit beta (469 aa).

156 to 163 is an ATP binding site; the sequence is GGAGVGKT.

It belongs to the ATPase alpha/beta chains family. As to quaternary structure, F-type ATPases have 2 components, CF(1) - the catalytic core - and CF(0) - the membrane proton channel. CF(1) has five subunits: alpha(3), beta(3), gamma(1), delta(1), epsilon(1). CF(0) has three main subunits: a(1), b(2) and c(9-12). The alpha and beta chains form an alternating ring which encloses part of the gamma chain. CF(1) is attached to CF(0) by a central stalk formed by the gamma and epsilon chains, while a peripheral stalk is formed by the delta and b chains.

It is found in the cell membrane. It carries out the reaction ATP + H2O + 4 H(+)(in) = ADP + phosphate + 5 H(+)(out). Its function is as follows. Produces ATP from ADP in the presence of a proton gradient across the membrane. The catalytic sites are hosted primarily by the beta subunits. This is ATP synthase subunit beta from Bacillus cereus (strain AH820).